Reading from the N-terminus, the 446-residue chain is Phosphoglucosamine mutase (446 aa).

Residue Ser-99 is the Phosphoserine intermediate of the active site. The Mg(2+) site is built by Ser-99, Asp-242, Asp-244, and Asp-246. Phosphoserine is present on Ser-99.

This sequence belongs to the phosphohexose mutase family. It depends on Mg(2+) as a cofactor. Post-translationally, activated by phosphorylation.

It carries out the reaction alpha-D-glucosamine 1-phosphate = D-glucosamine 6-phosphate. Its function is as follows. Catalyzes the conversion of glucosamine-6-phosphate to glucosamine-1-phosphate. This Campylobacter hominis (strain ATCC BAA-381 / DSM 21671 / CCUG 45161 / LMG 19568 / NCTC 13146 / CH001A) protein is Phosphoglucosamine mutase.